The primary structure comprises 422 residues: Synaptotagmin-1 (422 aa).

The Vesicular segment spans residues 1-57; the sequence is MVSESHHEALAAPPVTTVATVLPHNATEPASPGEGKEDAFSKLKEKFMNELHKIPLP. The N-linked (GlcNAc...) asparagine glycan is linked to Asn25. Residues 58–80 traverse the membrane as a helical segment; sequence PWALIAIAIVAVLLVLTCCFCIC. 5 S-palmitoyl cysteine lipidation sites follow: Cys75, Cys76, Cys78, Cys80, and Cys83. The Cytoplasmic portion of the chain corresponds to 81 to 422; that stretch reads KKCLFKKKNK…EVDAMLAVKK (342 aa). The tract at residues 113–142 is disordered; the sequence is TMKDQALKDDDAETGLTDGEEKEEPKEEEK. The span at 122-134 shows a compositional bias: acidic residues; the sequence is DDAETGLTDGEEK. Position 129 is a phosphothreonine (Thr129). Positions 136–382 are phospholipid binding; the sequence is EPKEEEKLGK…AIGKVFVGYN (247 aa). The C2 1 domain maps to 142–261; sequence KLGKLQYSLD…DFGHVTEEWR (120 aa). Positions 172, 173, and 179 each coordinate Ca(2+). Tyr230 carries the post-translational modification Phosphotyrosine. Residues Asp231, Phe232, Asp233, Ser236, Lys237, and Asp239 each contribute to the Ca(2+) site. The residue at position 265 (Ser265) is a Phosphoserine. The region spanning 273–406 is the C2 2 domain; sequence KLGDICFSLR…NPRRPIAQWH (134 aa). Residues Asp304 and Asp310 each contribute to the Ca(2+) site. Ser343 and Ser345 each carry phosphoserine. Asp364, Asp366, and Asp372 together coordinate Ca(2+).

The protein belongs to the synaptotagmin family. As to quaternary structure, homotetramer. Heterodimer; heterodimerizes with SYT2 in presence of calcium. Interacts with SCAMP5. Interacts with STON2. Forms a complex with SV2B, syntaxin 1 and SNAP25. Interacts with SV2A, SV2B and SV2C. Interacts with RIMS1. Interacts with PRRT2. Interacts with DNAJC5 in a phosphorylation-dependent manner. Interacts (via N-terminus) with RAB3A. Interacts with SYT12. Interacts with calmodulin. Interacts with DNM1 (via C-terminal proline-rich domain (PRD)); this interaction facilitates vesicle fission during clathrin-mediated endocytosis (CME). Ca(2+) serves as cofactor. Post-translationally, glycosylated.

Its subcellular location is the cytoplasmic vesicle. The protein localises to the secretory vesicle membrane. It is found in the secretory vesicle. It localises to the synaptic vesicle membrane. The protein resides in the chromaffin granule membrane. Its subcellular location is the cytoplasm. Calcium sensor that participates in triggering neurotransmitter release at the synapse. May have a regulatory role in the membrane interactions during trafficking of synaptic vesicles at the active zone of the synapse. It binds acidic phospholipids with a specificity that requires the presence of both an acidic head group and a diacyl backbone. A Ca(2+)-dependent interaction between synaptotagmin and putative receptors for activated protein kinase C has also been reported. It can bind to at least three additional proteins in a Ca(2+)-independent manner; these are neurexins, syntaxin and AP2. Plays a role in dendrite formation by melanocytes. This Bos taurus (Bovine) protein is Synaptotagmin-1.